Consider the following 251-residue polypeptide: UPF0246 protein PEPE_1842 (251 aa).

The protein belongs to the UPF0246 family.

This is UPF0246 protein PEPE_1842 from Pediococcus pentosaceus (strain ATCC 25745 / CCUG 21536 / LMG 10740 / 183-1w).